The chain runs to 1362 residues: Leptomycin B resistance protein pmd1 (1362 aa).

Positions 1–45 are disordered; the sequence is MSLHSKKSTSTVKDNEHSLDLSIKSIPSNEKNFSTEKSENEASES. At 1-91 the chain is on the cytoplasmic side; it reads MSLHSKKSTS…RILSYADKWD (91 aa). The segment covering 33–45 has biased composition (basic and acidic residues); it reads FSTEKSENEASES. The next 6 membrane-spanning stretches (helical) occupy residues 92–115, 138–162, 220–237, 244–264, 320–346, and 354–374; these read IMLQ…MSLV, TVDH…IYTV, LVFF…IAFI, LILS…VPFI, AIAM…WEGG, and LDVS…YSLA. One can recognise an ABC transmembrane type-1 1 domain in the interval 95-385; the sequence is QLAGTITGIG…ISPKMQSFVS (291 aa). Residues 375–788 lie on the Cytoplasmic side of the membrane; the sequence is NISPKMQSFV…LWFIHSFVRT (414 aa). Residues 420–665 enclose the ABC transporter 1 domain; the sequence is IELKNIRFVY…NGAYARLVEA (246 aa). 455–462 lines the ATP pocket; sequence GASGSGKS. The segment at 748-768 is disordered; it reads LPPADVGELNEEPKKSKKSKK. 6 helical membrane passes run 789 to 809, 835 to 859, 916 to 935, 940 to 957, 1022 to 1040, and 1054 to 1072; these read MIEI…GAAY, VNVF…SNFA, LGTF…LSLA, LGLV…AGYY, GLFF…ALTF, and IVQF…QQAG. An ABC transmembrane type-1 2 domain is found at 795 to 1083; the sequence is LLIGILASMI…FFGYSADVTK (289 aa). The Cytoplasmic portion of the chain corresponds to 1073 to 1362; that stretch reads QFFGYSADVT…LVVEQGLNKA (290 aa). Positions 1119–1356 constitute an ABC transporter 2 domain; the sequence is IEFRQVEFSY…RGRYYELVVE (238 aa). 1154–1161 is a binding site for ATP; it reads GSSGCGKS.

Belongs to the ABC transporter superfamily. ABCB family. Multidrug resistance exporter (TC 3.A.1.201) subfamily.

The protein localises to the membrane. May be a transmembrane transporter of the mating factor, namely P-factor or M-factor. Confers resistance to leptomycin B and to several other antifungal drugs. The protein is Leptomycin B resistance protein pmd1 (pmd1) of Schizosaccharomyces pombe (strain 972 / ATCC 24843) (Fission yeast).